We begin with the raw amino-acid sequence, 257 residues long: Imidazole glycerol phosphate synthase subunit HisF (257 aa).

Active-site residues include Asp11 and Asp130.

The protein belongs to the HisA/HisF family. As to quaternary structure, heterodimer of HisH and HisF.

It localises to the cytoplasm. It catalyses the reaction 5-[(5-phospho-1-deoxy-D-ribulos-1-ylimino)methylamino]-1-(5-phospho-beta-D-ribosyl)imidazole-4-carboxamide + L-glutamine = D-erythro-1-(imidazol-4-yl)glycerol 3-phosphate + 5-amino-1-(5-phospho-beta-D-ribosyl)imidazole-4-carboxamide + L-glutamate + H(+). The protein operates within amino-acid biosynthesis; L-histidine biosynthesis; L-histidine from 5-phospho-alpha-D-ribose 1-diphosphate: step 5/9. In terms of biological role, IGPS catalyzes the conversion of PRFAR and glutamine to IGP, AICAR and glutamate. The HisF subunit catalyzes the cyclization activity that produces IGP and AICAR from PRFAR using the ammonia provided by the HisH subunit. The sequence is that of Imidazole glycerol phosphate synthase subunit HisF from Afipia carboxidovorans (strain ATCC 49405 / DSM 1227 / KCTC 32145 / OM5) (Oligotropha carboxidovorans).